The following is a 407-amino-acid chain: MNGVKSWTVTLVFYFLILAVLIANLDGSSSLFGIIPKRANSSQKPPHLHLQQLGITGSRLLRFFQDNLLEFEGASSLPGDEQPGISLYYDSFKKYLYDAPHGPPRPLECNPDKSIVAKLTKDVQPIPVHSHNDYWRDLPLFQGIAHGAISTEADVWIYPKPTNADTPEDEYILAVGHNEVFLDPVHRTLDGLYTGPLADMLDQVNCVEGHKSGVFYDSPEDTLFFYIDFKSQETHLLYKLLMDKYLKPLMDKGYLTYFDLESKKLVWNQITVILTGDFPKDLGVIDNGENGYYNDNKRYAFQEANILEPTALEPNASVVSTSSLSNLLEKCGYNERSILSQGQMDNSLTKCIKSLISQSHEAGLRTRIWGVPNWPVSFATNLWHQQVENLGVDLLNVDNLDLAQSIF.

An N-terminal signal peptide occupies residues 1 to 23; it reads MNGVKSWTVTLVFYFLILAVLIA.

The protein belongs to the AIM6 family.

The polypeptide is Altered inheritance of mitochondria protein 6 (AIM6) (Zygosaccharomyces rouxii (strain ATCC 2623 / CBS 732 / NBRC 1130 / NCYC 568 / NRRL Y-229)).